Reading from the N-terminus, the 277-residue chain is Putative gamma-glutamylcyclotransferase YkqA (277 aa).

Residue 8–11 (YGTL) coordinates substrate. The Proton acceptor role is filled by E205.

Belongs to the gamma-glutamylcyclotransferase family.

Putative gamma-glutamylcyclotransferase. In Bacillus subtilis (strain 168), this protein is Putative gamma-glutamylcyclotransferase YkqA (ykqA).